A 157-amino-acid polypeptide reads, in one-letter code: Small ribosomal subunit protein uS7 (157 aa).

Belongs to the universal ribosomal protein uS7 family. In terms of assembly, part of the 30S ribosomal subunit. Contacts proteins S9 and S11.

Functionally, one of the primary rRNA binding proteins, it binds directly to 16S rRNA where it nucleates assembly of the head domain of the 30S subunit. Is located at the subunit interface close to the decoding center, probably blocks exit of the E-site tRNA. This is Small ribosomal subunit protein uS7 from Opitutus terrae (strain DSM 11246 / JCM 15787 / PB90-1).